The chain runs to 297 residues: Counting factor 45-1 (297 aa).

An N-terminal signal peptide occupies residues 1–20 (MNKLISLLLVCLVAIALVNA). One can recognise a Ch-type lysozyme domain in the interval 24–235 (IDFDSDTVNS…SASTGSGSGS (212 aa)). Residues Asp-29, Asp-119, and Glu-121 contribute to the active site. Residue Asn-166 is glycosylated (N-linked (GlcNAc...) asparagine). The segment at 231 to 296 (SGSGSSSGSS…GSSSGSGSGS (66 aa)) is S-G-S motif repeats. Residues 231 to 297 (SGSGSSSGSS…SSSGSGSGSS (67 aa)) are disordered. The span at 234 to 275 (GSSSGSSSGSSSGSSSGSGSSSGSGSSSGSSSGSGSGSSSSG) shows a compositional bias: low complexity. Over residues 276 to 297 (SGSGSGSSSGSGSSSGSGSGSS) the composition is skewed to gly residues.

The protein belongs to the glycosyl hydrolase 25 family. As to quaternary structure, monomer. Component of the counting factor (CF) complex, which includes cf60, cf50, cf45-1 and ctnA.

It localises to the secreted. In terms of biological role, cell-counting factor that limits the maximum size of the multicellular structure during aggregation. This chain is Counting factor 45-1 (cf45-1), found in Dictyostelium discoideum (Social amoeba).